The chain runs to 133 residues: Arginine decarboxylase proenzyme (133 aa).

The active-site Schiff-base intermediate with substrate; via pyruvic acid is the Ser81. At Ser81 the chain carries Pyruvic acid (Ser); by autocatalysis. Residue His86 is the Proton acceptor; for processing activity of the active site. Cys101 (proton donor; for catalytic activity) is an active-site residue.

This sequence belongs to the prokaryotic AdoMetDC family. Type 1 subfamily. Heterooctamer of four alpha and four beta chains arranged as a tetramer of alpha/beta heterodimers. Requires pyruvate as cofactor. Post-translationally, is synthesized initially as an inactive proenzyme. Formation of the active enzyme involves a self-maturation process in which the active site pyruvoyl group is generated from an internal serine residue via an autocatalytic post-translational modification. Two non-identical subunits are generated from the proenzyme in this reaction, and the pyruvate is formed at the N-terminus of the alpha chain, which is derived from the carboxyl end of the proenzyme. The post-translation cleavage follows an unusual pathway, termed non-hydrolytic serinolysis, in which the side chain hydroxyl group of the serine supplies its oxygen atom to form the C-terminus of the beta chain, while the remainder of the serine residue undergoes an oxidative deamination to produce ammonia and the pyruvoyl group blocking the N-terminus of the alpha chain.

It catalyses the reaction L-arginine + H(+) = agmatine + CO2. It participates in amine and polyamine biosynthesis; agmatine biosynthesis; agmatine from L-arginine: step 1/1. Functionally, specifically catalyzes the decarboxylation of L-arginine to agmatine. Has no S-adenosylmethionine decarboxylase (AdoMetDC) activity. This chain is Arginine decarboxylase proenzyme, found in Pyrobaculum arsenaticum (strain DSM 13514 / JCM 11321 / PZ6).